The sequence spans 430 residues: 3-phosphoshikimate 1-carboxyvinyltransferase (430 aa).

Residues K21, S22, and R26 each contribute to the 3-phosphoshikimate site. K21 serves as a coordination point for phosphoenolpyruvate. The phosphoenolpyruvate site is built by G94 and R122. 3-phosphoshikimate contacts are provided by S167, Q169, D317, and K344. Phosphoenolpyruvate is bound at residue Q169. D317 (proton acceptor) is an active-site residue. Phosphoenolpyruvate is bound by residues R348 and R390.

The protein belongs to the EPSP synthase family. Monomer.

It is found in the cytoplasm. The enzyme catalyses 3-phosphoshikimate + phosphoenolpyruvate = 5-O-(1-carboxyvinyl)-3-phosphoshikimate + phosphate. It participates in metabolic intermediate biosynthesis; chorismate biosynthesis; chorismate from D-erythrose 4-phosphate and phosphoenolpyruvate: step 6/7. Functionally, catalyzes the transfer of the enolpyruvyl moiety of phosphoenolpyruvate (PEP) to the 5-hydroxyl of shikimate-3-phosphate (S3P) to produce enolpyruvyl shikimate-3-phosphate and inorganic phosphate. This chain is 3-phosphoshikimate 1-carboxyvinyltransferase, found in Thermodesulfovibrio yellowstonii (strain ATCC 51303 / DSM 11347 / YP87).